Reading from the N-terminus, the 257-residue chain is Phosphate import ATP-binding protein PstB (257 aa).

The ABC transporter domain maps to 5-246 (LEIKDLTAFY…EVIFTSPKNE (242 aa)). 37-44 (GPSGCGKS) serves as a coordination point for ATP.

The protein belongs to the ABC transporter superfamily. Phosphate importer (TC 3.A.1.7) family. The complex is composed of two ATP-binding proteins (PstB), two transmembrane proteins (PstC and PstA) and a solute-binding protein (PstS).

It localises to the cell membrane. It catalyses the reaction phosphate(out) + ATP + H2O = ADP + 2 phosphate(in) + H(+). In terms of biological role, part of the ABC transporter complex PstSACB involved in phosphate import. Responsible for energy coupling to the transport system. This is Phosphate import ATP-binding protein PstB from Tropheryma whipplei (strain TW08/27) (Whipple's bacillus).